Here is a 93-residue protein sequence, read N- to C-terminus: Small ribosomal subunit protein uS19c (93 aa).

Belongs to the universal ribosomal protein uS19 family.

Its subcellular location is the plastid. The protein resides in the chloroplast. Its function is as follows. Protein S19 forms a complex with S13 that binds strongly to the 16S ribosomal RNA. This is Small ribosomal subunit protein uS19c from Ipomoea purpurea (Common morning glory).